We begin with the raw amino-acid sequence, 152 residues long: Ribosome maturation factor RimP (152 aa).

It belongs to the RimP family.

Its subcellular location is the cytoplasm. Functionally, required for maturation of 30S ribosomal subunits. This is Ribosome maturation factor RimP from Desulfatibacillum aliphaticivorans.